The chain runs to 284 residues: Acetyl-coenzyme A carboxylase carboxyl transferase subunit beta (284 aa).

Residues 25–284 (MWVKCPGCSA…ILGILYRPAA (260 aa)) enclose the CoA carboxyltransferase N-terminal domain. Cysteine 29, cysteine 32, cysteine 48, and cysteine 51 together coordinate Zn(2+). The C4-type zinc finger occupies 29-51 (CPGCSATLLAKDLDANLNVCPTC).

It belongs to the AccD/PCCB family. As to quaternary structure, acetyl-CoA carboxylase is a heterohexamer composed of biotin carboxyl carrier protein (AccB), biotin carboxylase (AccC) and two subunits each of ACCase subunit alpha (AccA) and ACCase subunit beta (AccD). Zn(2+) serves as cofactor.

The protein localises to the cytoplasm. The enzyme catalyses N(6)-carboxybiotinyl-L-lysyl-[protein] + acetyl-CoA = N(6)-biotinyl-L-lysyl-[protein] + malonyl-CoA. Its pathway is lipid metabolism; malonyl-CoA biosynthesis; malonyl-CoA from acetyl-CoA: step 1/1. Its function is as follows. Component of the acetyl coenzyme A carboxylase (ACC) complex. Biotin carboxylase (BC) catalyzes the carboxylation of biotin on its carrier protein (BCCP) and then the CO(2) group is transferred by the transcarboxylase to acetyl-CoA to form malonyl-CoA. The sequence is that of Acetyl-coenzyme A carboxylase carboxyl transferase subunit beta from Pelobacter propionicus (strain DSM 2379 / NBRC 103807 / OttBd1).